We begin with the raw amino-acid sequence, 340 residues long: Ferrochelatase (340 aa).

Residues His-189 and Glu-292 each coordinate Fe cation.

This sequence belongs to the ferrochelatase family.

It is found in the cytoplasm. It carries out the reaction heme b + 2 H(+) = protoporphyrin IX + Fe(2+). Its pathway is porphyrin-containing compound metabolism; protoheme biosynthesis; protoheme from protoporphyrin-IX: step 1/1. In terms of biological role, catalyzes the ferrous insertion into protoporphyrin IX. This chain is Ferrochelatase, found in Pseudomonas savastanoi pv. phaseolicola (strain 1448A / Race 6) (Pseudomonas syringae pv. phaseolicola (strain 1448A / Race 6)).